The sequence spans 784 residues: ATP-dependent zinc metalloprotease FTSH 9, chloroplastic/mitochondrial (784 aa).

Composition is skewed to low complexity over residues 1 to 12 (MSALQASLLLRP), 24 to 34 (PLPSSSASFPR), and 42 to 53 (PLPLRALASEGP). A chloroplast and mitochondrion-targeting transit peptide spans 1 to 47 (MSALQASLLLRPLPSPLPPRRRLPLPSSSASFPRAGHHRRLPLPLRA). Positions 1 to 71 (MSALQASLLL…DPPPPELPAA (71 aa)) are disordered. Positions 54-69 (QPAPSPAPDPPPPELP) are enriched in pro residues. Transmembrane regions (helical) follow at residues 104–124 (WVLA…DWVV) and 267–287 (IFST…GAAA). 368-375 (GSPGTGKT) is an ATP binding site. Histidine 601 provides a ligand contact to Zn(2+). Residue glutamate 602 is part of the active site. Zn(2+) contacts are provided by histidine 605 and aspartate 679.

The protein in the N-terminal section; belongs to the AAA ATPase family. This sequence in the C-terminal section; belongs to the peptidase M41 family. Zn(2+) is required as a cofactor.

Its subcellular location is the mitochondrion membrane. The protein localises to the plastid. It localises to the chloroplast thylakoid membrane. Its function is as follows. Probable ATP-dependent zinc metallopeptidase. The polypeptide is ATP-dependent zinc metalloprotease FTSH 9, chloroplastic/mitochondrial (FTSH9) (Oryza sativa subsp. japonica (Rice)).